Reading from the N-terminus, the 152-residue chain is Large ribosomal subunit protein bL9 (152 aa).

It belongs to the bacterial ribosomal protein bL9 family.

Binds to the 23S rRNA. This Microcystis aeruginosa (strain NIES-843 / IAM M-2473) protein is Large ribosomal subunit protein bL9.